Here is a 685-residue protein sequence, read N- to C-terminus: Translation initiation factor IF-2 (685 aa).

In terms of domain architecture, tr-type G spans 185–354 (KRPPVVTVMG…LLTAEMQELK (170 aa)). The G1 stretch occupies residues 194–201 (GHVDHGKT). 194 to 201 (GHVDHGKT) contacts GTP. Residues 219 to 223 (GITQH) are G2. A G3 region spans residues 240–243 (DTPG). Residues 240-244 (DTPGH) and 294-297 (NKMD) contribute to the GTP site. The segment at 294–297 (NKMD) is G4. Residues 330–332 (SAH) form a G5 region.

The protein belongs to the TRAFAC class translation factor GTPase superfamily. Classic translation factor GTPase family. IF-2 subfamily.

The protein resides in the cytoplasm. Functionally, one of the essential components for the initiation of protein synthesis. Protects formylmethionyl-tRNA from spontaneous hydrolysis and promotes its binding to the 30S ribosomal subunits. Also involved in the hydrolysis of GTP during the formation of the 70S ribosomal complex. The chain is Translation initiation factor IF-2 from Clostridium tetani (strain Massachusetts / E88).